Reading from the N-terminus, the 290-residue chain is Pantothenate synthetase (290 aa).

34-41 is an ATP binding site; it reads MGNLHDGH. Histidine 41 acts as the Proton donor in catalysis. Glutamine 65 is a (R)-pantoate binding site. Residue glutamine 65 participates in beta-alanine binding. 156–159 is an ATP binding site; sequence GKKD. A (R)-pantoate-binding site is contributed by glutamine 162. ATP contacts are provided by residues alanine 185 and 193 to 196; that span reads LSSR.

It belongs to the pantothenate synthetase family. In terms of assembly, homodimer.

It localises to the cytoplasm. The catalysed reaction is (R)-pantoate + beta-alanine + ATP = (R)-pantothenate + AMP + diphosphate + H(+). Its pathway is cofactor biosynthesis; (R)-pantothenate biosynthesis; (R)-pantothenate from (R)-pantoate and beta-alanine: step 1/1. Its function is as follows. Catalyzes the condensation of pantoate with beta-alanine in an ATP-dependent reaction via a pantoyl-adenylate intermediate. The polypeptide is Pantothenate synthetase (Acidovorax ebreus (strain TPSY) (Diaphorobacter sp. (strain TPSY))).